Reading from the N-terminus, the 576-residue chain is Peptidoglycan D,D-transpeptidase FtsI (576 aa).

Residues 22 to 42 traverse the membrane as a helical segment; the sequence is ITILLSLIIITIILVLSRITF. The Acyl-ester intermediate role is filled by Ser-308.

It belongs to the transpeptidase family. FtsI subfamily.

Its subcellular location is the cell inner membrane. It carries out the reaction Preferential cleavage: (Ac)2-L-Lys-D-Ala-|-D-Ala. Also transpeptidation of peptidyl-alanyl moieties that are N-acyl substituents of D-alanine.. It participates in cell wall biogenesis; peptidoglycan biosynthesis. Catalyzes cross-linking of the peptidoglycan cell wall at the division septum. This is Peptidoglycan D,D-transpeptidase FtsI from Buchnera aphidicola subsp. Baizongia pistaciae (strain Bp).